A 356-amino-acid polypeptide reads, in one-letter code: Golgi-resident adenosine 3',5'-bisphosphate 3'-phosphatase (356 aa).

Position 1 is an N-acetylmethionine (Met1). The Cytoplasmic segment spans residues 1–12; the sequence is MAPMGIRLSPLG. Residues 13 to 33 traverse the membrane as a helical segment; that stretch reads VAVFFLLGLGVLYHLYSGFLA. Topologically, residues 34-356 are lumenal; that stretch reads GRFSLFGLGS…KLPDLEKSGH (323 aa). Residues 84–104 form a disordered region; that stretch reads ESNVLHEKSKGKTREGADDKM. Asp108 functions as the Proton acceptor in the catalytic mechanism. Mg(2+) contacts are provided by Glu131, Asp172, Leu174, and Asp175. The active-site Proton acceptor is Thr177. Residues Ser240 and His243 each coordinate AMP. The N-linked (GlcNAc...) asparagine glycan is linked to Asn257. The AMP site is built by Gly266 and Lys270. Mg(2+) is bound at residue Asp298.

The protein belongs to the inositol monophosphatase superfamily. Requires Mg(2+) as cofactor. In terms of processing, N-glycosylated. Contains N-linked glycan resistant to endoglycosydase H.

It is found in the golgi apparatus. Its subcellular location is the trans-Golgi network membrane. It catalyses the reaction adenosine 3',5'-bisphosphate + H2O = AMP + phosphate. Its pathway is sulfur metabolism. Its activity is regulated as follows. Strongly inhibited by lithium. In terms of biological role, exhibits 3'-nucleotidase activity toward adenosine 3',5'-bisphosphate (PAP), namely hydrolyzes adenosine 3',5'-bisphosphate into adenosine 5'-monophosphate (AMP) and a phosphate. May play a role in the formation of skeletal elements derived through endochondral ossification, possibly by clearing adenosine 3',5'-bisphosphate produced by Golgi sulfotransferases during glycosaminoglycan sulfation. Has no activity toward 3'-phosphoadenosine 5'-phosphosulfate (PAPS) or inositol phosphate (IP) substrates including I(1)P, I(1,4)P2, I(1,3,4)P3, I(1,4,5)P3 and I(1,3,4,5)P4. This chain is Golgi-resident adenosine 3',5'-bisphosphate 3'-phosphatase, found in Mus musculus (Mouse).